A 168-amino-acid chain; its full sequence is Large ribosomal subunit protein uL29c (168 aa).

The interval 1–20 is disordered; it reads MLAIHSLSSTPCSSGLTSPP. The N-terminal 58 residues, 1–58, are a transit peptide targeting the chloroplast; it reads MLAIHSLSSTPCSSGLTSPPKSTLLTKSSFHGLRLPSVNLSSSLRLRVQTPPSSVVVM.

As to quaternary structure, component of the chloroplast large ribosomal subunit (LSU). Mature 70S chloroplast ribosomes of higher plants consist of a small (30S) and a large (50S) subunit. The 30S small subunit contains 1 molecule of ribosomal RNA (16S rRNA) and 24 different proteins. The 50S large subunit contains 3 rRNA molecules (23S, 5S and 4.5S rRNA) and 33 different proteins.

It localises to the plastid. The protein localises to the chloroplast. Its function is as follows. Component of the chloroplast ribosome (chloro-ribosome), a dedicated translation machinery responsible for the synthesis of chloroplast genome-encoded proteins, including proteins of the transcription and translation machinery and components of the photosynthetic apparatus. The protein is Large ribosomal subunit protein uL29c (RPL29) of Spinacia oleracea (Spinach).